A 92-amino-acid chain; its full sequence is MATTMRLDKYLKVSRLIKRRTVAKEVAEKGRIAVNGVTAKPGTNVKSGDELVIRFGPKIVTAKIERLEENAKKEQATEMYTILKEERTDESR.

The 61-residue stretch at 5–65 (MRLDKYLKVS…GPKIVTAKIE (61 aa)) folds into the S4 RNA-binding domain.

It belongs to the RqcP family. As to quaternary structure, associates with stalled 50S ribosomal subunits. Binds to RqcH, 23S rRNA and the P-site tRNA. Does not require RqcH for association with 50S subunits.

Key component of the ribosome quality control system (RQC), a ribosome-associated complex that mediates the extraction of incompletely synthesized nascent chains from stalled ribosomes and their subsequent degradation. RqcH recruits Ala-charged tRNA, and with RqcP directs the elongation of stalled nascent chains on 50S ribosomal subunits, leading to non-templated C-terminal alanine extensions (Ala tail). The Ala tail promotes nascent chain degradation. RqcP is associated with the translocation-like movement of the peptidyl-tRNA from the A-site into the P-site. This Listeria innocua serovar 6a (strain ATCC BAA-680 / CLIP 11262) protein is RQC P-site tRNA stabilizing factor.